A 299-amino-acid polypeptide reads, in one-letter code: Ribonuclease 3-like protein 3 (299 aa).

The RNase III domain occupies V39–N183. E79, D169, and E172 together coordinate Mg(2+). The DRBM domain occupies H209–E273. The tract at residues T274–S299 is disordered. Over residues L275–F291 the composition is skewed to polar residues.

Mg(2+) is required as a cofactor. The cofactor is Mn(2+).

In terms of biological role, cleaves double-stranded RNA (dsRNA). The chain is Ribonuclease 3-like protein 3 from Oryza sativa subsp. japonica (Rice).